A 146-amino-acid chain; its full sequence is uncharacterized protein (146 aa).

The HTH marR-type domain occupies 9–141 (VADIEKSLRH…FEKSLMKLQH (133 aa)). Positions 55 to 78 (IGELSGKMYLACSTTTDLIDRMQK) form a DNA-binding region, H-T-H motif.

This is an uncharacterized protein from Bacillus subtilis (strain 168).